Consider the following 252-residue polypeptide: Triosephosphate isomerase (252 aa).

9–11 (NWK) provides a ligand contact to substrate. Histidine 100 (electrophile) is an active-site residue. The Proton acceptor role is filled by glutamate 171. Substrate-binding positions include glycine 177, serine 216, and 237–238 (GG).

This sequence belongs to the triosephosphate isomerase family. Homodimer.

The protein localises to the cytoplasm. It carries out the reaction D-glyceraldehyde 3-phosphate = dihydroxyacetone phosphate. The protein operates within carbohydrate biosynthesis; gluconeogenesis. Its pathway is carbohydrate degradation; glycolysis; D-glyceraldehyde 3-phosphate from glycerone phosphate: step 1/1. Functionally, involved in the gluconeogenesis. Catalyzes stereospecifically the conversion of dihydroxyacetone phosphate (DHAP) to D-glyceraldehyde-3-phosphate (G3P). The protein is Triosephosphate isomerase of Polynucleobacter necessarius subsp. necessarius (strain STIR1).